Reading from the N-terminus, the 138-residue chain is Ig heavy chain V region TEPC 1017 (138 aa).

The first 20 residues, 1-20, serve as a signal peptide directing secretion; the sequence is MGWSYIILFLVATATDVHSQ. Positions 21–49 are framework-1; sequence VQLQQPGAELVKPGASVQLSCKASGHTFT. C41 and C115 are disulfide-bonded. The complementarity-determining-1 stretch occupies residues 50 to 54; the sequence is NYWIH. The segment at 55–68 is framework-2; the sequence is WVKQRPGQGLEWIG. A complementarity-determining-2 region spans residues 69–85; it reads EINPNDGRSNYNEKFKN. The segment at 86–117 is framework-3; that stretch reads KATLTVDKSSSTAYMQLSSLTPEEFAVYYCAR. Residues 118–127 are complementarity-determining-3; that stretch reads SDGYYDWFVY. The framework-4 stretch occupies residues 128–138; that stretch reads WGQGTLVTFSA.

The protein is Ig heavy chain V region TEPC 1017 of Mus musculus (Mouse).